A 394-amino-acid polypeptide reads, in one-letter code: 3-hydroxybenzoate 6-hydroxylase 1 (394 aa).

It belongs to the 3-hydroxybenzoate 6-hydroxylase family. Homotrimer. Requires FAD as cofactor.

The catalysed reaction is 3-hydroxybenzoate + NADH + O2 + H(+) = 2,5-dihydroxybenzoate + NAD(+) + H2O. Inhibited by manganese, copper, mercury, and iron ions. In terms of biological role, catalyzes the NAD- or NADP-dependent conversion of 3-hydroxybenzoate to gentisate. The affinity of the enzyme toward NAD is twice as high as for NADP. The enzyme shows higher specific activities against the intermediates in the degradation of 2,5-xylenol and 3,5-xylenol, 3-hydroxy-4-methylbenzoate and 3-hydroxy-5-methylbenzoate, respectively, than for 3-hydroxybenzoate. It also shows activity against 3-substituted benzoates. This chain is 3-hydroxybenzoate 6-hydroxylase 1 (xlnD), found in Aquipseudomonas alcaligenes (Pseudomonas alcaligenes).